Consider the following 103-residue polypeptide: Cell division suppressor protein YneA (103 aa).

Positions V36–I87 constitute a LysM domain.

It belongs to the YneA family.

The protein localises to the cytoplasm. Inhibits cell division during the SOS response. Affects a later stage of the cell division protein assembly, after the assembly of the Z ring, by probably suppressing recruitment of FtsL and/or DivIC to the division machinery. This is Cell division suppressor protein YneA from Bacillus pumilus (strain SAFR-032).